The sequence spans 211 residues: Probable calcium-binding protein CML11 (211 aa).

Disordered regions lie at residues 1–22 and 40–60; these read MSEP…AAAT and SCSA…LGDD. Over residues 44–53 the composition is skewed to low complexity; the sequence is QQQQQQQQQQ. EF-hand domains are found at residues 60-95, 96-131, 136-171, and 172-207; these read DQLG…LGLK, PSTD…ELLY, YSED…LGHA, and LTVK…AAFD. Positions 73, 75, 77, 79, 84, 109, 111, 113, 120, 149, 151, 153, 160, 185, 187, 189, 191, and 196 each coordinate Ca(2+).

In terms of biological role, potential calcium sensor. The sequence is that of Probable calcium-binding protein CML11 (CML11) from Oryza sativa subsp. japonica (Rice).